A 116-amino-acid chain; its full sequence is Non-specific lipid-transfer protein 10 (116 aa).

A signal peptide spans 1–22 (MMRVVLPLCLLLASIFAWGSEA). Intrachain disulfides connect cysteine 26–cysteine 73, cysteine 36–cysteine 50, cysteine 51–cysteine 98, and cysteine 71–cysteine 112.

The protein belongs to the plant LTP family.

Its function is as follows. Plant non-specific lipid-transfer proteins transfer phospholipids as well as galactolipids across membranes. May play a role in wax or cutin deposition in the cell walls of expanding epidermal cells and certain secretory tissues. This is Non-specific lipid-transfer protein 10 (LTP10) from Arabidopsis thaliana (Mouse-ear cress).